A 76-amino-acid polypeptide reads, in one-letter code: Protein sigN132 (76 aa).

Positions 1-13 (MLFESISTLSNLK) are enriched in polar residues. The interval 1-33 (MLFESISTLSNLKSASKSSMIASTGSTSSKSSN) is disordered. Low complexity predominate over residues 14 to 33 (SASKSSMIASTGSTSSKSSN).

The sequence is that of Protein sigN132 from Dictyostelium discoideum (Social amoeba).